The following is a 161-amino-acid chain: MAEKVEEYRGCVIPKDLYYDIENQVWFKVNEDGTVTVGVTDIGQARAGKIINIRIKPPGKYVKKGKPVASLESGKWAGPVPADIEGEVVERNEKLFDKPDLINEDPYGEGWIAKLKPANLERDLQDLVTGEEAVQKLKEYIEREDVNCGEERAQISKKFYK.

The region spanning 34–116 (TVTVGVTDIG…YGEGWIAKLK (83 aa)) is the Lipoyl-binding domain. Lys-75 is subject to N6-lipoyllysine.

Belongs to the GcvH family. In terms of assembly, the glycine cleavage system is composed of four proteins: P, T, L and H. (R)-lipoate is required as a cofactor.

Its function is as follows. The glycine cleavage system catalyzes the degradation of glycine. The H protein shuttles the methylamine group of glycine from the P protein to the T protein. This is Glycine cleavage system H protein 2 from Aquifex aeolicus (strain VF5).